The following is a 173-amino-acid chain: Adenine phosphoribosyltransferase (173 aa).

It belongs to the purine/pyrimidine phosphoribosyltransferase family. In terms of assembly, homodimer.

It localises to the cytoplasm. The enzyme catalyses AMP + diphosphate = 5-phospho-alpha-D-ribose 1-diphosphate + adenine. The protein operates within purine metabolism; AMP biosynthesis via salvage pathway; AMP from adenine: step 1/1. Functionally, catalyzes a salvage reaction resulting in the formation of AMP, that is energically less costly than de novo synthesis. This is Adenine phosphoribosyltransferase from Desulfosudis oleivorans (strain DSM 6200 / JCM 39069 / Hxd3) (Desulfococcus oleovorans).